Consider the following 147-residue polypeptide: Protein phosphatase 1 regulatory subunit 14A (147 aa).

The span at 1–11 shows a compositional bias: basic residues; that stretch reads MAAQRLGKRVL. The disordered stretch occupies residues 1–37; that stretch reads MAAQRLGKRVLSKLQSPSRARGPGGSPSGLQKRHARV. Ser26 bears the Phosphoserine mark. Positions 35–120 are inhibitory; the sequence is ARVTVKYDRR…LLAKLRGLHK (86 aa). Thr38 carries the post-translational modification Phosphothreonine. Residues 118–147 form a disordered region; the sequence is LHKQPGFPQPSPSDDPSLSPRQDPAHTAPP. Phosphoserine is present on residues Ser128, Ser134, and Ser136.

This sequence belongs to the PP1 inhibitor family.

The protein localises to the cytoplasm. Functionally, inhibitor of PPP1CA. Has over 1000-fold higher inhibitory activity when phosphorylated, creating a molecular switch for regulating the phosphorylation status of PPP1CA substrates and smooth muscle contraction. In Rattus norvegicus (Rat), this protein is Protein phosphatase 1 regulatory subunit 14A (Ppp1r14a).